The chain runs to 540 residues: Peptide chain release factor 3 (540 aa).

Positions 14-283 (ELRRNFAIIS…YFLNYALKPG (270 aa)) constitute a tr-type G domain. GTP-binding positions include 23–30 (SHPDAGKT), 91–95 (DTPGH), and 145–148 (NKLD).

Belongs to the TRAFAC class translation factor GTPase superfamily. Classic translation factor GTPase family. PrfC subfamily.

The protein resides in the cytoplasm. Increases the formation of ribosomal termination complexes and stimulates activities of RF-1 and RF-2. It binds guanine nucleotides and has strong preference for UGA stop codons. It may interact directly with the ribosome. The stimulation of RF-1 and RF-2 is significantly reduced by GTP and GDP, but not by GMP. The polypeptide is Peptide chain release factor 3 (Trichormus variabilis (strain ATCC 29413 / PCC 7937) (Anabaena variabilis)).